Here is a 161-residue protein sequence, read N- to C-terminus: Regulator of ribonuclease activity A (161 aa).

Belongs to the RraA family. Homotrimer. Binds to both RNA-binding sites in the C-terminal region of Rne and to RhlB.

Its subcellular location is the cytoplasm. Its function is as follows. Globally modulates RNA abundance by binding to RNase E (Rne) and regulating its endonucleolytic activity. Can modulate Rne action in a substrate-dependent manner by altering the composition of the degradosome. Modulates RNA-binding and helicase activities of the degradosome. This Pectobacterium atrosepticum (strain SCRI 1043 / ATCC BAA-672) (Erwinia carotovora subsp. atroseptica) protein is Regulator of ribonuclease activity A.